Consider the following 186-residue polypeptide: Ribosome-recycling factor (186 aa).

It belongs to the RRF family.

The protein localises to the cytoplasm. Responsible for the release of ribosomes from messenger RNA at the termination of protein biosynthesis. May increase the efficiency of translation by recycling ribosomes from one round of translation to another. The chain is Ribosome-recycling factor from Rhizobium leguminosarum bv. trifolii (strain WSM2304).